A 178-amino-acid chain; its full sequence is MINTNTLARPYAKAAFEFASAAQQADAWLNMLSLSAAAVQTPAVAQQLVNPALTDEQKVNVLAQICAGHIDASFSNFLRSLGSNDRLSLLPVVREQFAVLKAEAERALDVEVESAFELNAEQLQTLAAALSKRLDRTVQPKPVVNPALIGGVVIRAGDLVIDGSVRGKLNKLAEALKS.

Belongs to the ATPase delta chain family. As to quaternary structure, F-type ATPases have 2 components, F(1) - the catalytic core - and F(0) - the membrane proton channel. F(1) has five subunits: alpha(3), beta(3), gamma(1), delta(1), epsilon(1). F(0) has three main subunits: a(1), b(2) and c(10-14). The alpha and beta chains form an alternating ring which encloses part of the gamma chain. F(1) is attached to F(0) by a central stalk formed by the gamma and epsilon chains, while a peripheral stalk is formed by the delta and b chains.

It is found in the cell inner membrane. Functionally, f(1)F(0) ATP synthase produces ATP from ADP in the presence of a proton or sodium gradient. F-type ATPases consist of two structural domains, F(1) containing the extramembraneous catalytic core and F(0) containing the membrane proton channel, linked together by a central stalk and a peripheral stalk. During catalysis, ATP synthesis in the catalytic domain of F(1) is coupled via a rotary mechanism of the central stalk subunits to proton translocation. This protein is part of the stalk that links CF(0) to CF(1). It either transmits conformational changes from CF(0) to CF(1) or is implicated in proton conduction. The sequence is that of ATP synthase subunit delta from Ectopseudomonas mendocina (strain ymp) (Pseudomonas mendocina).